Here is a 317-residue protein sequence, read N- to C-terminus: Small ribosomal subunit protein RACK1 (317 aa).

7 WD repeats span residues 13–44 (GHSG…IMWK), 61–91 (GHSH…RLWD), 103–133 (GHTK…KLWN), 146–178 (SHTE…KVWN), 190–220 (GHTG…MLWD), 231–260 (DGGD…KIWD), and 281–311 (AEPP…RVWQ).

It belongs to the WD repeat G protein beta family. Ribosomal protein RACK1 subfamily.

The protein localises to the cytoplasm. Involved in the recruitment, assembly and/or regulation of a variety of signaling molecules. Interacts with a wide variety of proteins and plays a role in many cellular processes. Required for VANGL2 membrane localization, inhibits Wnt signaling and regulates cellular polarization and oriented cell division during gastrulation. The sequence is that of Small ribosomal subunit protein RACK1 (gnb2l1) from Danio rerio (Zebrafish).